The primary structure comprises 246 residues: Large ribosomal subunit protein uL3 (246 aa).

Residues 140–162 are disordered; the sequence is SHRSIGSTGGRQDPGKTFKNKKM. Gln151 is modified (N5-methylglutamine).

The protein belongs to the universal ribosomal protein uL3 family. As to quaternary structure, part of the 50S ribosomal subunit. Forms a cluster with proteins L14 and L19. Post-translationally, methylated by PrmB.

Its function is as follows. One of the primary rRNA binding proteins, it binds directly near the 3'-end of the 23S rRNA, where it nucleates assembly of the 50S subunit. The chain is Large ribosomal subunit protein uL3 from Methylobacterium sp. (strain 4-46).